A 381-amino-acid chain; its full sequence is Protein COS1 (381 aa).

Over methionine 1–glutamate 42 the chain is Cytoplasmic. The chain crosses the membrane as a helical span at residues isoleucine 43–tryptophan 63. The Extracellular segment spans residues lysine 64–proline 72. The helical transmembrane segment at leucine 73–leucine 93 threads the bilayer. Residues serine 94–lysine 231 lie on the Cytoplasmic side of the membrane. A helical membrane pass occupies residues arginine 232–serine 252. Over arginine 253 to glycine 254 the chain is Extracellular. A helical membrane pass occupies residues methionine 255 to phenylalanine 275. Over glutamine 276–alanine 381 the chain is Cytoplasmic.

The protein belongs to the DUP/COS family.

It is found in the membrane. This is Protein COS1 (COS1) from Saccharomyces cerevisiae (strain ATCC 204508 / S288c) (Baker's yeast).